A 292-amino-acid polypeptide reads, in one-letter code: Shikimate dehydrogenase (NADP(+)) (292 aa).

Shikimate-binding positions include 25-27 and threonine 72; that span reads SKS. Lysine 76 (proton acceptor) is an active-site residue. Residues asparagine 97 and aspartate 113 each coordinate shikimate. NADP(+) contacts are provided by residues 137–141, 161–166, and methionine 230; these read GAGGA and NRTQSK. Tyrosine 232 serves as a coordination point for shikimate. Position 254 (glycine 254) interacts with NADP(+).

Belongs to the shikimate dehydrogenase family. In terms of assembly, homodimer.

The catalysed reaction is shikimate + NADP(+) = 3-dehydroshikimate + NADPH + H(+). The protein operates within metabolic intermediate biosynthesis; chorismate biosynthesis; chorismate from D-erythrose 4-phosphate and phosphoenolpyruvate: step 4/7. Its function is as follows. Involved in the biosynthesis of the chorismate, which leads to the biosynthesis of aromatic amino acids. Catalyzes the reversible NADPH linked reduction of 3-dehydroshikimate (DHSA) to yield shikimate (SA). The sequence is that of Shikimate dehydrogenase (NADP(+)) from Shewanella sp. (strain MR-4).